A 201-amino-acid polypeptide reads, in one-letter code: Probable chemoreceptor glutamine deamidase CheD (201 aa).

The protein belongs to the CheD family.

The catalysed reaction is L-glutaminyl-[protein] + H2O = L-glutamyl-[protein] + NH4(+). Its function is as follows. Probably deamidates glutamine residues to glutamate on methyl-accepting chemotaxis receptors (MCPs), playing an important role in chemotaxis. The polypeptide is Probable chemoreceptor glutamine deamidase CheD (Chlorobium luteolum (strain DSM 273 / BCRC 81028 / 2530) (Pelodictyon luteolum)).